A 277-amino-acid polypeptide reads, in one-letter code: Large ribosomal subunit protein uL2 (277 aa).

The disordered stretch occupies residues 222-277 (GVAMNPVDHPHGGGEGRTSGGRHPVSPWGKPTKGKRTRSNKATDKFIMRTRHQRKK).

Belongs to the universal ribosomal protein uL2 family. Part of the 50S ribosomal subunit. Forms a bridge to the 30S subunit in the 70S ribosome.

One of the primary rRNA binding proteins. Required for association of the 30S and 50S subunits to form the 70S ribosome, for tRNA binding and peptide bond formation. It has been suggested to have peptidyltransferase activity; this is somewhat controversial. Makes several contacts with the 16S rRNA in the 70S ribosome. The chain is Large ribosomal subunit protein uL2 from Bartonella tribocorum (strain CIP 105476 / IBS 506).